The following is a 226-amino-acid chain: Triosephosphate isomerase (226 aa).

A substrate-binding site is contributed by 12–14; sequence NFK. His-96 acts as the Electrophile in catalysis. The active-site Proton acceptor is the Glu-144. Substrate-binding positions include Ile-149, Gly-184, and 205–206; that span reads AS.

The protein belongs to the triosephosphate isomerase family. In terms of assembly, homotetramer; dimer of dimers.

It is found in the cytoplasm. The enzyme catalyses D-glyceraldehyde 3-phosphate = dihydroxyacetone phosphate. The protein operates within carbohydrate biosynthesis; gluconeogenesis. It participates in carbohydrate degradation; glycolysis; D-glyceraldehyde 3-phosphate from glycerone phosphate: step 1/1. Involved in the gluconeogenesis. Catalyzes stereospecifically the conversion of dihydroxyacetone phosphate (DHAP) to D-glyceraldehyde-3-phosphate (G3P). The protein is Triosephosphate isomerase of Thermococcus kodakarensis (strain ATCC BAA-918 / JCM 12380 / KOD1) (Pyrococcus kodakaraensis (strain KOD1)).